We begin with the raw amino-acid sequence, 751 residues long: Photosystem I P700 chlorophyll a apoprotein A1 (751 aa).

The next 8 membrane-spanning stretches (helical) occupy residues 72–95, 158–181, 197–221, 293–311, 348–371, 387–413, 435–457, and 532–550; these read IFSA…FHGA, LYCT…FHYH, MNHH…HVSL, TAHH…GHMY, WHAQ…HHMY, LSLF…IFMV, AIIS…LYVH, and FLVH…LILL. Residues C574 and C583 each contribute to the [4Fe-4S] cluster site. Helical transmembrane passes span 590–611 and 665–687; these read HVFL…HFSW and LSAY…MFLF. H676 contacts chlorophyll a'. M684 and Y692 together coordinate chlorophyll a. W693 is a phylloquinone binding site. A helical transmembrane segment spans residues 725–745; sequence AVGVTHYLLGGIVTTWAFFLA.

The protein belongs to the PsaA/PsaB family. The PsaA/B heterodimer binds the P700 chlorophyll special pair and subsequent electron acceptors. PSI consists of a core antenna complex that captures photons, and an electron transfer chain that converts photonic excitation into a charge separation. The cyanobacterial PSI reaction center is composed of one copy each of PsaA,B,C,D,E,F,I,J,K,L,M and X, and forms trimeric complexes. PSI electron transfer chain: 5 chlorophyll a, 1 chlorophyll a', 2 phylloquinones and 3 4Fe-4S clusters. PSI core antenna: 90 chlorophyll a, 22 carotenoids, 3 phospholipids and 1 galactolipid. P700 is a chlorophyll a/chlorophyll a' dimer, A0 is one or more chlorophyll a, A1 is one or both phylloquinones and FX is a shared 4Fe-4S iron-sulfur center. is required as a cofactor.

The protein resides in the cellular thylakoid membrane. The enzyme catalyses reduced [plastocyanin] + hnu + oxidized [2Fe-2S]-[ferredoxin] = oxidized [plastocyanin] + reduced [2Fe-2S]-[ferredoxin]. PsaA and PsaB bind P700, the primary electron donor of photosystem I (PSI), as well as the electron acceptors A0, A1 and FX. PSI is a plastocyanin/cytochrome c6-ferredoxin oxidoreductase, converting photonic excitation into a charge separation, which transfers an electron from the donor P700 chlorophyll pair to the spectroscopically characterized acceptors A0, A1, FX, FA and FB in turn. Oxidized P700 is reduced on the lumenal side of the thylakoid membrane by plastocyanin or cytochrome c6. The chain is Photosystem I P700 chlorophyll a apoprotein A1 from Gloeothece citriformis (strain PCC 7424) (Cyanothece sp. (strain PCC 7424)).